The primary structure comprises 140 residues: NADPH-dependent 7-cyano-7-deazaguanine reductase (140 aa).

The Thioimide intermediate role is filled by Cys49. The active-site Proton donor is Asp56. Substrate-binding positions include 71–73 (IEL) and 90–91 (HE).

The protein belongs to the GTP cyclohydrolase I family. QueF type 1 subfamily.

Its subcellular location is the cytoplasm. The enzyme catalyses 7-aminomethyl-7-carbaguanine + 2 NADP(+) = 7-cyano-7-deazaguanine + 2 NADPH + 3 H(+). It functions in the pathway tRNA modification; tRNA-queuosine biosynthesis. Its function is as follows. Catalyzes the NADPH-dependent reduction of 7-cyano-7-deazaguanine (preQ0) to 7-aminomethyl-7-deazaguanine (preQ1). The protein is NADPH-dependent 7-cyano-7-deazaguanine reductase of Prochlorococcus marinus (strain NATL2A).